Here is a 345-residue protein sequence, read N- to C-terminus: Transcription initiation factor IIB (345 aa).

Residues 20–53 (IVLTCPECKVYPPKIVERFSEGDVVCALCGLVLS) form a TFIIB-type zinc finger. 4 residues coordinate Zn(2+): Cys-24, Cys-27, Cys-45, and Cys-48. The segment covering 65 to 78 (TFSNDDHNGDDPSR) has biased composition (basic and acidic residues). Residues 65-93 (TFSNDDHNGDDPSRVGEASNPLLDGNNLS) are disordered. Tandem repeats lie at residues 136-212 (LCDA…IMKN) and 242-318 (FCSH…ILYE).

The protein belongs to the TFIIB family. As to quaternary structure, associates with TFIID-IIA (DA complex) to form TFIID-IIA-IIB (DAB-complex) which is then recognized by polymerase II.

The protein resides in the nucleus. In terms of biological role, general factor that plays a major role in the activation of eukaryotic genes transcribed by RNA polymerase II. This chain is Transcription initiation factor IIB (SUA7), found in Saccharomyces cerevisiae (strain ATCC 204508 / S288c) (Baker's yeast).